A 678-amino-acid polypeptide reads, in one-letter code: MAANVGSMFQYWKRFDLQQLQRELDATATVLANRQDESEQSRKRLIEQSREFKKNTPEDLRKQVAPLLKSFQGEIDALSKRSKEAEAAFLNVYKRLIDVPDPVPALDLGQQLQLKVQRLHDIETENQKLRETLEEYNKEFAEVKNQEVTIKALKEKIREYEQTLKNQAETIALEKEQKLQNDFAEKERKLQETQMSTTSKLEEAEHKVQSLQTALEKTRTELFDLKTKYDEETTAKADEIEMIMTDLERANQRAEVAQREAETLREQLSSANHSLQLASQIQKAPDVEQAIEVLTRSSLEVELAAKEREIAQLVEDVQRLQASLTKLRENSASQISQLEQQLSAKNSTLKQLEEKLKGQADYEEVKKELNILKSMEFAPSEGAGTQDAAKPLEVLLLEKNRSLQSENAALRISNSDLSGRCAELQVRVTEAVATATEQRELIARLEQDLSIIQSIQRPDAEGAAEHRLEKIPEPIKEATALFYGPTAPASGALPEGQVDSLLSIISSQRERFRARNQELEAENRLAQHTLQALQSELDSLRADNIKLFEKIKFLQSYPGRGSGSDDTELRYSSQYEERLDPFSSFSKRERQRKYLSMSPWDKATLSMGRLVLSNKMARTIGFFYTLFLHCLVFLVLYKLAWSESMERDCATFCAKKFADHLHKFHENDNGAAAGDLWQ.

Residues 1-619 are Cytoplasmic-facing; that stretch reads MAANVGSMFQ…LVLSNKMART (619 aa). 2 coiled-coil regions span residues 67-450 and 502-556; these read LLKS…QDLS and LSII…FLQS. At Ser586 the chain carries Phosphoserine. The helical; Anchor for type IV membrane protein transmembrane segment at 620 to 640 threads the bilayer; sequence IGFFYTLFLHCLVFLVLYKLA. The Lumenal segment spans residues 641 to 678; it reads WSESMERDCATFCAKKFADHLHKFHENDNGAAAGDLWQ.

The protein belongs to the CASP family. In terms of assembly, homodimer; disulfide-linked. Interacts with GOLGA5.

It is found in the golgi apparatus membrane. In terms of biological role, may be involved in intra-Golgi retrograde transport. This Pongo abelii (Sumatran orangutan) protein is Protein CASP (CUTL1).